We begin with the raw amino-acid sequence, 881 residues long: Formin-like protein 10 (881 aa).

The first 24 residues, 1–24, serve as a signal peptide directing secretion; the sequence is MAMKRVVFLLLLVAASALVKSSRG. Residues 194–223 form a disordered region; it reads LTPSNSLNMEPPSPYYPSKSAHKHQGVAPP. The helical transmembrane segment at 236–256 threads the bilayer; it reads VVLIAVLPTAALSFLAAFLCF. The segment covering 333–346 has biased composition (polar residues); sequence TLVTGGTQENNATS. 3 disordered regions span residues 333–427, 683–703, and 837–881; these read TLVT…EVNA, ENGRSPPFPSTSDDNSNESLQ, and ASQK…DSND. Over residues 351–390 the composition is skewed to pro residues; that stretch reads LMPPPPPPPPPPPPPPPPPPPRPPPPPPPIKKGAPPPAPP. A compositionally biased stretch (low complexity) spans 400-424; the sequence is LSPTESSRSEESSASELASESSETE. One can recognise an FH2 domain in the interval 422–854; the sequence is ETEVNAPRAK…KSQANGNSNN (433 aa). Residues 692–701 are compositionally biased toward polar residues; that stretch reads STSDDNSNES. Positions 846 to 865 are enriched in low complexity; sequence SQANGNSNNPSSQSNPQEQQ. Over residues 870-881 the composition is skewed to basic and acidic residues; the sequence is LDHHFDSSDSND.

This sequence belongs to the formin-like family. Class-I subfamily.

The protein resides in the membrane. The protein is Formin-like protein 10 (FH10) of Oryza sativa subsp. japonica (Rice).